The following is a 206-amino-acid chain: Holliday junction branch migration complex subunit RuvA (206 aa).

The tract at residues 1–63 (MISSLRGDVI…DDAHTLYAFS (63 aa)) is domain I. Residues 64–142 (TSEQRETFGI…ALEATSGQAT (79 aa)) are domain II. The tract at residues 143–150 (IGDIAATG) is flexible linker. The domain III stretch occupies residues 151 to 206 (NDTALQSQVVEALVGLGFTEAKAATAVKKILEEQNGTTDPSSVLREALQRLSGQKR).

It belongs to the RuvA family. Homotetramer. Forms an RuvA(8)-RuvB(12)-Holliday junction (HJ) complex. HJ DNA is sandwiched between 2 RuvA tetramers; dsDNA enters through RuvA and exits via RuvB. An RuvB hexamer assembles on each DNA strand where it exits the tetramer. Each RuvB hexamer is contacted by two RuvA subunits (via domain III) on 2 adjacent RuvB subunits; this complex drives branch migration. In the full resolvosome a probable DNA-RuvA(4)-RuvB(12)-RuvC(2) complex forms which resolves the HJ.

It is found in the cytoplasm. In terms of biological role, the RuvA-RuvB-RuvC complex processes Holliday junction (HJ) DNA during genetic recombination and DNA repair, while the RuvA-RuvB complex plays an important role in the rescue of blocked DNA replication forks via replication fork reversal (RFR). RuvA specifically binds to HJ cruciform DNA, conferring on it an open structure. The RuvB hexamer acts as an ATP-dependent pump, pulling dsDNA into and through the RuvAB complex. HJ branch migration allows RuvC to scan DNA until it finds its consensus sequence, where it cleaves and resolves the cruciform DNA. This is Holliday junction branch migration complex subunit RuvA from Corynebacterium urealyticum (strain ATCC 43042 / DSM 7109).